The chain runs to 278 residues: 4-hydroxy-tetrahydrodipicolinate reductase (278 aa).

NAD(+) contacts are provided by residues 13–18 and 111–113; these read GAAGKM and GTT. Histidine 167 acts as the Proton donor/acceptor in catalysis. (S)-2,3,4,5-tetrahydrodipicolinate is bound at residue histidine 168. Residue lysine 171 is the Proton donor of the active site. 177–178 contributes to the (S)-2,3,4,5-tetrahydrodipicolinate binding site; that stretch reads GT.

Belongs to the DapB family.

Its subcellular location is the cytoplasm. It carries out the reaction (S)-2,3,4,5-tetrahydrodipicolinate + NAD(+) + H2O = (2S,4S)-4-hydroxy-2,3,4,5-tetrahydrodipicolinate + NADH + H(+). It catalyses the reaction (S)-2,3,4,5-tetrahydrodipicolinate + NADP(+) + H2O = (2S,4S)-4-hydroxy-2,3,4,5-tetrahydrodipicolinate + NADPH + H(+). Its pathway is amino-acid biosynthesis; L-lysine biosynthesis via DAP pathway; (S)-tetrahydrodipicolinate from L-aspartate: step 4/4. Functionally, catalyzes the conversion of 4-hydroxy-tetrahydrodipicolinate (HTPA) to tetrahydrodipicolinate. This Nostoc sp. (strain PCC 7120 / SAG 25.82 / UTEX 2576) protein is 4-hydroxy-tetrahydrodipicolinate reductase.